Consider the following 451-residue polypeptide: Tubulin alpha-1 chain (451 aa).

Gln11 is a GTP binding site. Lys40 bears the N6-acetyllysine mark. Positions 71, 145, 179, 206, and 228 each coordinate GTP. Mg(2+) is bound at residue Glu71. Residue Glu254 is part of the active site. The disordered stretch occupies residues 429–451 (EKDYEEVGAESGEGEEGDEGEEY). Acidic residues predominate over residues 431 to 451 (DYEEVGAESGEGEEGDEGEEY).

This sequence belongs to the tubulin family. Dimer of alpha and beta chains. A typical microtubule is a hollow water-filled tube with an outer diameter of 25 nm and an inner diameter of 15 nM. Alpha-beta heterodimers associate head-to-tail to form protofilaments running lengthwise along the microtubule wall with the beta-tubulin subunit facing the microtubule plus end conferring a structural polarity. Microtubules usually have 13 protofilaments but different protofilament numbers can be found in some organisms and specialized cells. Requires Mg(2+) as cofactor. Post-translationally, undergoes a tyrosination/detyrosination cycle, the cyclic removal and re-addition of a C-terminal tyrosine residue by the enzymes tubulin tyrosine carboxypeptidase (TTCP) and tubulin tyrosine ligase (TTL), respectively. In terms of processing, acetylation of alpha chains at Lys-40 stabilizes microtubules and affects affinity and processivity of microtubule motors. This modification has a role in multiple cellular functions, ranging from cell motility, cell cycle progression or cell differentiation to intracellular trafficking and signaling.

The protein resides in the cytoplasm. Its subcellular location is the cytoskeleton. It carries out the reaction GTP + H2O = GDP + phosphate + H(+). Functionally, tubulin is the major constituent of microtubules, a cylinder consisting of laterally associated linear protofilaments composed of alpha- and beta-tubulin heterodimers. Microtubules grow by the addition of GTP-tubulin dimers to the microtubule end, where a stabilizing cap forms. Below the cap, tubulin dimers are in GDP-bound state, owing to GTPase activity of alpha-tubulin. In Anemia phyllitidis (Fern), this protein is Tubulin alpha-1 chain (TUBA1).